A 295-amino-acid chain; its full sequence is Protease HtpX (295 aa).

The next 2 helical transmembrane spans lie at 4–24 (ILLFVATNLAVVLVASITLSL) and 41–61 (SSLLVFCAVFGFAGSLVSLFI). H147 lines the Zn(2+) pocket. E148 is a catalytic residue. H151 is a binding site for Zn(2+). 2 consecutive transmembrane segments (helical) span residues 158–178 (VTLALVQGVVNTFVMFFARII) and 199–219 (VATIVAELILGILASMIVMWF). E224 is a binding site for Zn(2+).

It belongs to the peptidase M48B family. Requires Zn(2+) as cofactor.

Its subcellular location is the cell inner membrane. This is Protease HtpX from Pseudomonas putida (strain ATCC 47054 / DSM 6125 / CFBP 8728 / NCIMB 11950 / KT2440).